Consider the following 89-residue polypeptide: Large ribosomal subunit protein bL27 (89 aa).

The protein belongs to the bacterial ribosomal protein bL27 family.

This chain is Large ribosomal subunit protein bL27, found in Ruegeria sp. (strain TM1040) (Silicibacter sp.).